We begin with the raw amino-acid sequence, 89 residues long: Small ribosomal subunit protein uS15 (89 aa).

It belongs to the universal ribosomal protein uS15 family. As to quaternary structure, part of the 30S ribosomal subunit. Forms a bridge to the 50S subunit in the 70S ribosome, contacting the 23S rRNA.

In terms of biological role, one of the primary rRNA binding proteins, it binds directly to 16S rRNA where it helps nucleate assembly of the platform of the 30S subunit by binding and bridging several RNA helices of the 16S rRNA. Functionally, forms an intersubunit bridge (bridge B4) with the 23S rRNA of the 50S subunit in the ribosome. In Desulfatibacillum aliphaticivorans, this protein is Small ribosomal subunit protein uS15.